The following is a 406-amino-acid chain: NADH-quinone oxidoreductase subunit D (406 aa).

Belongs to the complex I 49 kDa subunit family. In terms of assembly, NDH-1 is composed of 14 different subunits. Subunits NuoB, C, D, E, F, and G constitute the peripheral sector of the complex.

It is found in the cell inner membrane. It catalyses the reaction a quinone + NADH + 5 H(+)(in) = a quinol + NAD(+) + 4 H(+)(out). Functionally, NDH-1 shuttles electrons from NADH, via FMN and iron-sulfur (Fe-S) centers, to quinones in the respiratory chain. The immediate electron acceptor for the enzyme in this species is believed to be ubiquinone. Couples the redox reaction to proton translocation (for every two electrons transferred, four hydrogen ions are translocated across the cytoplasmic membrane), and thus conserves the redox energy in a proton gradient. This is NADH-quinone oxidoreductase subunit D from Acidiphilium cryptum (strain JF-5).